We begin with the raw amino-acid sequence, 397 residues long: 1-deoxy-D-xylulose 5-phosphate reductoisomerase (397 aa).

NADPH is bound by residues Thr12, Gly13, Ser14, Ile15, Gly38, Lys39, Asn40, and Asn126. Lys127 contributes to the 1-deoxy-D-xylulose 5-phosphate binding site. Position 128 (Glu128) interacts with NADPH. Asp152 is a binding site for Mn(2+). 1-deoxy-D-xylulose 5-phosphate-binding residues include Ser153, Glu154, Ser188, and His211. Glu154 contacts Mn(2+). NADPH is bound at residue Gly217. Ser224, Asn229, Lys230, and Glu233 together coordinate 1-deoxy-D-xylulose 5-phosphate. Glu233 serves as a coordination point for Mn(2+).

It belongs to the DXR family. It depends on Mg(2+) as a cofactor. Mn(2+) is required as a cofactor.

The catalysed reaction is 2-C-methyl-D-erythritol 4-phosphate + NADP(+) = 1-deoxy-D-xylulose 5-phosphate + NADPH + H(+). Its pathway is isoprenoid biosynthesis; isopentenyl diphosphate biosynthesis via DXP pathway; isopentenyl diphosphate from 1-deoxy-D-xylulose 5-phosphate: step 1/6. Functionally, catalyzes the NADPH-dependent rearrangement and reduction of 1-deoxy-D-xylulose-5-phosphate (DXP) to 2-C-methyl-D-erythritol 4-phosphate (MEP). The protein is 1-deoxy-D-xylulose 5-phosphate reductoisomerase of Haemophilus influenzae (strain PittGG).